We begin with the raw amino-acid sequence, 284 residues long: D-tagatose-1,6-bisphosphate aldolase subunit GatY (284 aa).

Aspartate 82 serves as the catalytic Proton donor. Histidine 83 and histidine 180 together coordinate Zn(2+). Glycine 181 contributes to the dihydroxyacetone phosphate binding site. A Zn(2+)-binding site is contributed by histidine 208. Residues 209–211 and 230–233 each bind dihydroxyacetone phosphate; these read GAS and NVAT.

The protein belongs to the class II fructose-bisphosphate aldolase family. TagBP aldolase GatY subfamily. As to quaternary structure, forms a complex with GatZ. Zn(2+) is required as a cofactor.

The catalysed reaction is D-tagatofuranose 1,6-bisphosphate = D-glyceraldehyde 3-phosphate + dihydroxyacetone phosphate. It participates in carbohydrate metabolism; D-tagatose 6-phosphate degradation; D-glyceraldehyde 3-phosphate and glycerone phosphate from D-tagatose 6-phosphate: step 2/2. In terms of biological role, catalytic subunit of the tagatose-1,6-bisphosphate aldolase GatYZ, which catalyzes the reversible aldol condensation of dihydroxyacetone phosphate (DHAP or glycerone-phosphate) with glyceraldehyde 3-phosphate (G3P) to produce tagatose 1,6-bisphosphate (TBP). Requires GatZ subunit for full activity and stability. Is involved in the catabolism of galactitol. This Escherichia coli O6:K15:H31 (strain 536 / UPEC) protein is D-tagatose-1,6-bisphosphate aldolase subunit GatY.